A 343-amino-acid chain; its full sequence is Phosphoribosylformylglycinamidine cyclo-ligase (343 aa).

Belongs to the AIR synthase family.

The protein resides in the cytoplasm. The enzyme catalyses 2-formamido-N(1)-(5-O-phospho-beta-D-ribosyl)acetamidine + ATP = 5-amino-1-(5-phospho-beta-D-ribosyl)imidazole + ADP + phosphate + H(+). The protein operates within purine metabolism; IMP biosynthesis via de novo pathway; 5-amino-1-(5-phospho-D-ribosyl)imidazole from N(2)-formyl-N(1)-(5-phospho-D-ribosyl)glycinamide: step 2/2. The polypeptide is Phosphoribosylformylglycinamidine cyclo-ligase (Enterococcus faecalis (strain ATCC 700802 / V583)).